Reading from the N-terminus, the 983-residue chain is Ephrin type-A receptor 3 (983 aa).

A signal peptide spans 1 to 20 (MDCQLSILLLLSCSVLDSFG). The Extracellular segment spans residues 21–541 (ELIPQPSNEV…SFSISGESSQ (521 aa)). One can recognise an Eph LBD domain in the interval 29–207 (EVNLLDSKTI…YFKKCPFTVK (179 aa)). Residues N232, N337, N391, N404, and N493 are each glycosylated (N-linked (GlcNAc...) asparagine). 2 consecutive Fibronectin type-III domains span residues 325-435 (PPSS…TNQA) and 436-531 (APSP…TSPD). The helical transmembrane segment at 542–565 (VVMIAISAAVAIILLTVVIYVLIG) threads the bilayer. Residues 566-983 (RFCGYKSKHG…TQSKNGPVPV (418 aa)) are Cytoplasmic-facing. Y596 and Y602 each carry phosphotyrosine; by autocatalysis. In terms of domain architecture, Protein kinase spans 621-882 (ISIDKVVGAG…QIVSILDKLI (262 aa)). ATP is bound by residues 628–633 (GAGEFG), K653, and 700–706 (EYMENGS). Y701 carries the post-translational modification Phosphotyrosine; by autocatalysis. Residue D746 is the Proton acceptor of the active site. 750-751 (RN) lines the ATP pocket. Residue Y779 is modified to Phosphotyrosine; by autocatalysis. Residues 911 to 975 (TTFRTTGDWL…ISSIKALETQ (65 aa)) enclose the SAM domain. Y937 bears the Phosphotyrosine mark. The short motif at 981-983 (VPV) is the PDZ-binding element.

Belongs to the protein kinase superfamily. Tyr protein kinase family. Ephrin receptor subfamily. Heterotetramer upon binding of the ligand. The heterotetramer is composed of an ephrin dimer and a receptor dimer. Oligomerization is probably required to induce biological responses. Forms a ternary EFNA5-EPHA3-ADAM10 complex mediating EFNA5 extracellular domain shedding by ADAM10 which regulates the EFNA5-EPHA3 complex internalization and function. Interacts with NCK1 (via SH2 domain); mediates EFNA5-EPHA3 signaling. Interacts (phosphorylated) with PTPN1; dephosphorylates EPHA3 and may regulate its trafficking and function. Interacts (phosphorylated) with CRK; mediates EFNA5-EPHA3 signaling through RHOA GTPase activation. Autophosphorylates upon activation by EFNA5. Phosphorylation on Tyr-602 mediates interaction with NCK1. Dephosphorylated by PTPN1. In terms of tissue distribution, widely expressed. Highest level in placenta.

It is found in the cell membrane. The protein resides in the secreted. The enzyme catalyses L-tyrosyl-[protein] + ATP = O-phospho-L-tyrosyl-[protein] + ADP + H(+). Functionally, receptor tyrosine kinase which binds promiscuously membrane-bound ephrin family ligands residing on adjacent cells, leading to contact-dependent bidirectional signaling into neighboring cells. The signaling pathway downstream of the receptor is referred to as forward signaling while the signaling pathway downstream of the ephrin ligand is referred to as reverse signaling. Highly promiscuous for ephrin-A ligands it binds preferentially EFNA5. Upon activation by EFNA5 regulates cell-cell adhesion, cytoskeletal organization and cell migration. Plays a role in cardiac cells migration and differentiation and regulates the formation of the atrioventricular canal and septum during development probably through activation by EFNA1. Involved in the retinotectal mapping of neurons. May also control the segregation but not the guidance of motor and sensory axons during neuromuscular circuit development. The polypeptide is Ephrin type-A receptor 3 (EPHA3) (Homo sapiens (Human)).